Consider the following 91-residue polypeptide: DNA-directed RNA polymerase subunit omega (91 aa).

The tract at residues 66–91 is disordered; the sequence is QMPPPLPNFPGAANREATGAEDAAGE.

The protein belongs to the RNA polymerase subunit omega family. In terms of assembly, the RNAP catalytic core consists of 2 alpha, 1 beta, 1 beta' and 1 omega subunit. When a sigma factor is associated with the core the holoenzyme is formed, which can initiate transcription.

It catalyses the reaction RNA(n) + a ribonucleoside 5'-triphosphate = RNA(n+1) + diphosphate. Promotes RNA polymerase assembly. Latches the N- and C-terminal regions of the beta' subunit thereby facilitating its interaction with the beta and alpha subunits. In Acidithiobacillus ferrooxidans (strain ATCC 23270 / DSM 14882 / CIP 104768 / NCIMB 8455) (Ferrobacillus ferrooxidans (strain ATCC 23270)), this protein is DNA-directed RNA polymerase subunit omega.